The chain runs to 488 residues: Palmitoleoyl-protein carboxylesterase notum1' (488 aa).

The first 19 residues, 1 to 19 (MAGTLCVTLLLLLSTIAVG), serve as a signal peptide directing secretion. The N-linked (GlcNAc...) asparagine glycan is linked to Asn90. Catalysis depends on charge relay system residues Ser226, Asp334, and His383.

The protein belongs to the pectinacetylesterase family. Notum subfamily. As to expression, expressed in the egg and through cleavage to gastrulation stages. Enriched in the animal (prospective ectoderm) and dorsal regions in early gastrula. Shows a dynamic expression during embryogenesis, in particular during neural induction and antero-posterior (AP) patterning.

The protein localises to the secreted. It catalyses the reaction [Wnt protein]-O-(9Z)-hexadecenoyl-L-serine + H2O = [Wnt protein]-L-serine + (9Z)-hexadecenoate + H(+). In terms of biological role, carboxylesterase that acts as a key negative regulator of the Wnt signaling pathway by specifically mediating depalmitoleoylation of WNT proteins. Serine palmitoleoylation of WNT proteins is required for efficient binding to frizzled receptors. Functions in the prospective ectoderm and is required for neural induction. The sequence is that of Palmitoleoyl-protein carboxylesterase notum1' from Xenopus laevis (African clawed frog).